A 393-amino-acid polypeptide reads, in one-letter code: Methylthioribose kinase (393 aa).

ATP-binding positions include Asn38, Lys53, and 107 to 109 (EDL). Asp225 contacts substrate. ATP is bound at residue 242-244 (DPE). Substrate is bound at residue Arg332.

It belongs to the methylthioribose kinase family. Homodimer.

It catalyses the reaction 5-(methylsulfanyl)-D-ribose + ATP = 5-(methylsulfanyl)-alpha-D-ribose 1-phosphate + ADP + H(+). Its pathway is amino-acid biosynthesis; L-methionine biosynthesis via salvage pathway; S-methyl-5-thio-alpha-D-ribose 1-phosphate from S-methyl-5'-thioadenosine (hydrolase route): step 2/2. Catalyzes the phosphorylation of methylthioribose into methylthioribose-1-phosphate. The polypeptide is Methylthioribose kinase (Bacillus cereus (strain AH820)).